We begin with the raw amino-acid sequence, 116 residues long: Protein Rev (116 aa).

Residues S5 and S8 each carry the phosphoserine; by host CK2 modification. Positions 18-26 (LIKFLYQSN) are homomultimerization. Positions 23–48 (YQSNPPPSPEGTRQARRNRRRRWRAR) are disordered. Positions 34-50 (TRQARRNRRRRWRARQR) match the Nuclear localization signal and RNA-binding (RRE) motif. Positions 36–48 (QARRNRRRRWRAR) are enriched in basic residues. Positions 73–84 (LQLPPLERLNLN) match the Nuclear export signal and binding to XPO1 motif. The disordered stretch occupies residues 90 to 116 (GTSGTQGVGSPQIPVEPPAVLESGTEE). A phosphoserine; by host mark is found at S92 and S99.

Belongs to the HIV-1 REV protein family. In terms of assembly, homomultimer; when bound to the RRE. Multimeric assembly is essential for activity and may involve XPO1. Binds to human KPNB1, XPO1, TNPO1, RANBP5 and IPO7. Interacts with the viral Integrase. Interacts with human KHDRBS1. Interacts with human NAP1; this interaction decreases Rev multimerization and stimulates its activity. Interacts with human DEAD-box helicases DDX3 and DDX24; these interactions may serve for viral RNA export to the cytoplasm and packaging, respectively. Interacts with human PSIP1; this interaction may inhibit HIV-1 DNA integration by promoting dissociation of the Integrase-LEDGF/p75 complex. Post-translationally, asymmetrically arginine dimethylated at one site by host PRMT6. Methylation impairs the RNA-binding activity and export of viral RNA from the nucleus to the cytoplasm. In terms of processing, phosphorylated by protein kinase CK2. Presence of, and maybe binding to the N-terminus of the regulatory beta subunit of CK2 is necessary for CK2-mediated Rev's phosphorylation.

Its subcellular location is the host nucleus. The protein resides in the host nucleolus. It is found in the host cytoplasm. Escorts unspliced or incompletely spliced viral pre-mRNAs (late transcripts) out of the nucleus of infected cells. These pre-mRNAs carry a recognition sequence called Rev responsive element (RRE) located in the env gene, that is not present in fully spliced viral mRNAs (early transcripts). This function is essential since most viral proteins are translated from unspliced or partially spliced pre-mRNAs which cannot exit the nucleus by the pathway used by fully processed cellular mRNAs. Rev itself is translated from a fully spliced mRNA that readily exits the nucleus. Rev's nuclear localization signal (NLS) binds directly to KPNB1/Importin beta-1 without previous binding to KPNA1/Importin alpha-1. KPNB1 binds to the GDP bound form of RAN (Ran-GDP) and targets Rev to the nucleus. In the nucleus, the conversion from Ran-GDP to Ran-GTP dissociates Rev from KPNB1 and allows Rev's binding to the RRE in viral pre-mRNAs. Rev multimerization on the RRE via cooperative assembly exposes its nuclear export signal (NES) to the surface. Rev can then form a complex with XPO1/CRM1 and Ran-GTP, leading to nuclear export of the complex. Conversion from Ran-GTP to Ran-GDP mediates dissociation of the Rev/RRE/XPO1/RAN complex, so that Rev can return to the nucleus for a subsequent round of export. Beside KPNB1, also seems to interact with TNPO1/Transportin-1, RANBP5/IPO5 and IPO7/RANBP7 for nuclear import. The nucleoporin-like HRB/RIP is an essential cofactor that probably indirectly interacts with Rev to release HIV RNAs from the perinuclear region to the cytoplasm. The protein is Protein Rev of Homo sapiens (Human).